The following is a 317-amino-acid chain: Cell division protein FtsQ (317 aa).

Residues 1-63 (MDGGGRFVFA…RIHIPAHTGT (63 aa)) lie on the Cytoplasmic side of the membrane. Residues 64–82 (ISAVAFYAMIGLYGMSLGG) traverse the membrane as a helical segment. Topologically, residues 83–317 (HTNIVTQTTT…KALKKAEKNT (235 aa)) are periplasmic. The POTRA domain maps to 97–165 (FAVEDVKVSG…KTVEVRLKER (69 aa)).

The protein belongs to the FtsQ/DivIB family. FtsQ subfamily.

The protein resides in the cell inner membrane. In terms of biological role, essential cell division protein. The sequence is that of Cell division protein FtsQ from Agrobacterium fabrum (strain C58 / ATCC 33970) (Agrobacterium tumefaciens (strain C58)).